The following is a 527-amino-acid chain: Berberine bridge enzyme-like 10 (527 aa).

The N-terminal stretch at 1 to 20 (MEKLLVISLLLLISTSVTTS) is a signal peptide. A disulfide bridge connects residues Cys32 and Cys95. A glycan (N-linked (GlcNAc...) asparagine) is linked at Asn53. An FAD-binding PCMH-type domain is found at 73–248 (TTPKPISVVA…LGYKIQLVPV (176 aa)). Residue His110 is modified to Pros-8alpha-FAD histidine. N-linked (GlcNAc...) asparagine glycans are attached at residues Asn137 and Asn293.

Belongs to the oxygen-dependent FAD-linked oxidoreductase family. Requires FAD as cofactor.

Its subcellular location is the secreted. The protein localises to the cell wall. The sequence is that of Berberine bridge enzyme-like 10 from Arabidopsis thaliana (Mouse-ear cress).